Reading from the N-terminus, the 110-residue chain is Large ribosomal subunit protein uL22 (110 aa).

Belongs to the universal ribosomal protein uL22 family. As to quaternary structure, part of the 50S ribosomal subunit.

Functionally, this protein binds specifically to 23S rRNA; its binding is stimulated by other ribosomal proteins, e.g. L4, L17, and L20. It is important during the early stages of 50S assembly. It makes multiple contacts with different domains of the 23S rRNA in the assembled 50S subunit and ribosome. In terms of biological role, the globular domain of the protein is located near the polypeptide exit tunnel on the outside of the subunit, while an extended beta-hairpin is found that lines the wall of the exit tunnel in the center of the 70S ribosome. In Exiguobacterium sp. (strain ATCC BAA-1283 / AT1b), this protein is Large ribosomal subunit protein uL22.